A 319-amino-acid chain; its full sequence is Transcription factor VBP (319 aa).

2 stretches are compositionally biased toward low complexity: residues 1–31 (MPGR…GAVA) and 143–158 (ASAS…STAV). Disordered stretches follow at residues 1–35 (MPGR…QQPE) and 139–186 (EKEP…DPDC). Positions 159 to 180 (YQQSEAASSTESPPQNERNTPS) are enriched in polar residues. The bZIP domain occupies 243-306 (DEKYWTRRKK…GRCKNIVSKY (64 aa)). The interval 245 to 265 (KYWTRRKKNNVAAKRSRDARR) is basic motif. Residues 266–273 (LKENQITI) form a leucine-zipper region.

Belongs to the bZIP family. PAR subfamily. As to quaternary structure, binds DNA as a homodimer or a heterodimer. Exists as a stable dimer in the absence of DNA. As to expression, isoform 1 and isoform 3 are expressed in a variety of somatic tissues, including liver, heart, intestine, stomach and kidney. Both isoforms are also expressed in hepatoma (LMH) cells and in embryonic fibroblast cell lines. Isoform 2 and isoform 4 are expressed in adult heart and intestine.

The protein resides in the nucleus. In terms of biological role, transcription factor that binds to and transactivates the vitellogenin II (VTG2) promoter. Binds to the palindromic sequence 5'-GTTTACATAAAC-3'. The chain is Transcription factor VBP (TEF) from Gallus gallus (Chicken).